Consider the following 774-residue polypeptide: Armadillo-like helical domain-containing protein 4 (774 aa).

The N-terminal stretch at 1-27 is a signal peptide; it reads MRGPIVLHICLAFCSLLLFSVATQCLA. Topologically, residues 28–714 are extracellular; it reads FPKIERRREI…KDKAGYMSGM (687 aa). The span at 41 to 52 shows a compositional bias: basic and acidic residues; the sequence is HAEKGQSDKMNT. 2 disordered regions span residues 41-63 and 97-135; these read HAEKGQSDKMNTDDLENSSVTSK and QPGQAGLMQTERPGVSTPTESGVPSAEEVFGSSQPERIS. The N-linked (GlcNAc...) asparagine glycan is linked to Asn57. Asn189 carries an N-linked (GlcNAc...) asparagine glycan. Basic and acidic residues predominate over residues 221 to 233; sequence KTEKFEADTDHRT. Disordered regions lie at residues 221-275 and 600-669; these read KTEK…QPLE and ASYG…PGLE. A compositionally biased stretch (polar residues) spans 258–275; the sequence is SQMTADNTQAAATKQPLE. Over residues 607 to 651 the composition is skewed to acidic residues; that stretch reads LESEEGQEDEDEEDEEDEDEEEEDEEEDEEDKDADSLDEGLDGDT. Residues 715–735 traverse the membrane as a helical segment; the sequence is LVPVGVGIAGALFILGALYSI. Residues 736 to 774 lie on the Cytoplasmic side of the membrane; the sequence is KVMNRRRRNGFKRHKRKQREFNSMQDRVMLLADSSEDEF. Residues Ser769 and Ser770 each carry the phosphoserine modification.

In terms of assembly, interacts with IL6ST; this interaction prevents IL6ST protein homodimerization and bridges ARMH4 with IL6R and STAT3 and therefore inhibits phosphorylation of STAT3 at 'Tyr-705'. Interacts (via cytoplasmic tail) with RICTOR; this interaction bridges ARMH4 to the mTORC2 complex and inhibits the mTORC2 kinase activity. As to expression, expressed in podocytes.

It localises to the membrane. May modulate immune response and may play a role in inflammation. Down-modulates STAT3 signaling throught direct interaction with IL6ST, resulting in the inhibition of phosphorylation of STAT3 at 'Tyr-705'. May negatively regulates AKT signaling by modulating the activity of mTORC2 complex through RICTOR interaction. The polypeptide is Armadillo-like helical domain-containing protein 4 (Homo sapiens (Human)).